The sequence spans 117 residues: Large ribosomal subunit protein bL20 (117 aa).

This sequence belongs to the bacterial ribosomal protein bL20 family.

Its function is as follows. Binds directly to 23S ribosomal RNA and is necessary for the in vitro assembly process of the 50S ribosomal subunit. It is not involved in the protein synthesizing functions of that subunit. The polypeptide is Large ribosomal subunit protein bL20 (Campylobacter lari (strain RM2100 / D67 / ATCC BAA-1060)).